The following is a 440-amino-acid chain: Ribulose bisphosphate carboxylase large chain (440 aa).

At Lys-4 the chain carries N6,N6,N6-trimethyllysine. Asn-113 and Thr-163 together coordinate substrate. The active-site Proton acceptor is the Lys-165. Lys-167 contacts substrate. Residues Lys-191, Asp-193, and Glu-194 each coordinate Mg(2+). Lys-191 carries the post-translational modification N6-carboxylysine. His-284 acts as the Proton acceptor in catalysis. The substrate site is built by Arg-285, His-317, and Ser-369.

The protein belongs to the RuBisCO large chain family. Type I subfamily. As to quaternary structure, heterohexadecamer of 8 large chains and 8 small chains; disulfide-linked. The disulfide link is formed within the large subunit homodimers. Mg(2+) is required as a cofactor. Post-translationally, the disulfide bond which can form in the large chain dimeric partners within the hexadecamer appears to be associated with oxidative stress and protein turnover.

It localises to the plastid. The protein localises to the chloroplast. The enzyme catalyses 2 (2R)-3-phosphoglycerate + 2 H(+) = D-ribulose 1,5-bisphosphate + CO2 + H2O. The catalysed reaction is D-ribulose 1,5-bisphosphate + O2 = 2-phosphoglycolate + (2R)-3-phosphoglycerate + 2 H(+). Its function is as follows. RuBisCO catalyzes two reactions: the carboxylation of D-ribulose 1,5-bisphosphate, the primary event in carbon dioxide fixation, as well as the oxidative fragmentation of the pentose substrate in the photorespiration process. Both reactions occur simultaneously and in competition at the same active site. This chain is Ribulose bisphosphate carboxylase large chain, found in Polystichum munitum (Western sword-fern).